We begin with the raw amino-acid sequence, 424 residues long: Endo-beta-1,4-galactanase (424 aa).

The signal sequence occupies residues Met-1–Ala-26. Asp-142–Lys-145 provides a ligand contact to substrate. Glu-190 acts as the Proton donor in catalysis. Residues Thr-229–Asn-230 and His-263 each bind substrate. The Nucleophile role is filled by Glu-288. Thr-292 is a binding site for substrate. The Ca(2+) site is built by Asp-297, Asp-299, His-301, and Asn-303. Positions 307 and 384 each coordinate substrate. 2 residues coordinate Ca(2+): Ser-392 and Asp-395.

It belongs to the glycosyl hydrolase 53 family. It depends on Ca(2+) as a cofactor.

The catalysed reaction is The enzyme specifically hydrolyzes (1-&gt;4)-beta-D-galactosidic linkages in type I arabinogalactans.. Involved in galactan degradation. Degrades arabinose-free galactan to galactooligosaccharides, producing galactotetraose as the main product along with galactotriose, galactobiose, and galactose. May hydrolyze the beta-1,4-galactan linkages of the galactan portion of arabinogalactan type I, a pectic plant polysaccharide from which most of the arabinose has been removed. In Bacillus licheniformis (strain ATCC 14580 / DSM 13 / JCM 2505 / CCUG 7422 / NBRC 12200 / NCIMB 9375 / NCTC 10341 / NRRL NRS-1264 / Gibson 46), this protein is Endo-beta-1,4-galactanase (ganB).